A 319-amino-acid chain; its full sequence is Malate dehydrogenase (319 aa).

NAD(+)-binding positions include 10–15 (GAGNIG) and Asp-34. Substrate contacts are provided by Arg-83 and Arg-89. NAD(+) contacts are provided by residues Asn-96 and 119–121 (ITN). Positions 121 and 152 each coordinate substrate. The Proton acceptor role is filled by His-176.

The protein belongs to the LDH/MDH superfamily. MDH type 3 family.

It catalyses the reaction (S)-malate + NAD(+) = oxaloacetate + NADH + H(+). Functionally, catalyzes the reversible oxidation of malate to oxaloacetate. The chain is Malate dehydrogenase from Francisella tularensis subsp. mediasiatica (strain FSC147).